The following is a 1069-amino-acid chain: Leucine--tRNA ligase (1069 aa).

Positions 19–53 (TAEHGTGAANATASPSGAVPPSGATATAGTGDEPG) are disordered. The 'HIGH' region motif lies at 107 to 118 (PYPSGTGLHVGH). The span at 823 to 836 (GRFTHHGAPVDRRS) shows a compositional bias: basic and acidic residues. The tract at residues 823 to 846 (GRFTHHGAPVDRRSGKMGKSLKNS) is disordered. The 'KMSKS' region motif lies at 838–842 (KMGKS). Position 841 (lysine 841) interacts with ATP.

The protein belongs to the class-I aminoacyl-tRNA synthetase family.

Its subcellular location is the cytoplasm. The catalysed reaction is tRNA(Leu) + L-leucine + ATP = L-leucyl-tRNA(Leu) + AMP + diphosphate. The polypeptide is Leucine--tRNA ligase (Frankia alni (strain DSM 45986 / CECT 9034 / ACN14a)).